The chain runs to 798 residues: Bromodomain-containing protein 2 (798 aa).

The residue at position 1 (Met1) is an N-acetylmethionine. The interval 1-21 is disordered; that stretch reads MLQNVTPHKLPGEGNAGLLGL. Thr6 is modified (phosphothreonine). Ser36 carries the post-translational modification Phosphoserine. The segment at 53-72 is disordered; it reads LQLAPANPPPPEVSNPKKPG. A Bromo 1 domain is found at 73 to 179; the sequence is RVTNQLQYLH…KIFLQKVASM (107 aa). The a protein site is built by Asp111, Tyr154, Asn155, Lys156, Asp159, and Asp160. 3 disordered regions span residues 267-348, 455-648, and 735-798; these read PPAQ…LSEQ, EPLE…KRQL, and EKRL…SDSG. Residues 284–297 are compositionally biased toward low complexity; it reads TTTPTPTAILAPGS. Ser297, Ser300, and Ser304 each carry phosphoserine. Basic and acidic residues predominate over residues 315–331; sequence MRRESGRPIKPPRKDLP. Positions 343–452 constitute a Bromo 2 domain; sequence GKLSEQLKHC…DVFEFRYAKM (110 aa). Acidic residues predominate over residues 480–512; it reads SSEESSSESSSEEEEEEDEEDEEEESESSDSEE. The segment covering 542–564 has biased composition (basic residues); the sequence is KPKRKREKKEKKKKRKAEKHRGR. The short motif at 553–557 is the Nuclear localization signal element; that stretch reads KKKRK. The 83-residue stretch at 630 to 712 folds into the NET domain; that stretch reads DSEEEEESRP…SCLRKKPRKP (83 aa). A Phosphoserine modification is found at Ser631. Residues 637–648 show a composition bias toward basic and acidic residues; that stretch reads SRPMSYDEKRQL. A compositionally biased stretch (low complexity) spans 772-792; sequence SASSSSSDSSSSSSSSSSSDT.

Belongs to the BET family. In terms of assembly, homodimer. Interacts with E2F1. Interacts with (acetylated) STAT3; promoting STAT3 recruitment to chromatin. Interacts with CTCF; promoting BRD2 recruitment to chromatin.

The protein resides in the nucleus. Its subcellular location is the chromosome. Functionally, chromatin reader protein that specifically recognizes and binds histone H4 acetylated at 'Lys-5' and 'Lys-12' (H4K5ac and H4K12ac, respectively), thereby controlling gene expression and remodeling chromatin structures. Recruits transcription factors and coactivators to target gene sites, and activates RNA polymerase II machinery for transcriptional elongation. Plays a key role in genome compartmentalization via its association with CTCF and cohesin: recruited to chromatin by CTCF and promotes formation of topologically associating domains (TADs) via its ability to bind acetylated histones, contributing to CTCF boundary formation and enhancer insulation. Also recognizes and binds acetylated non-histone proteins, such as STAT3. Involved in inflammatory response by regulating differentiation of naive CD4(+) T-cells into T-helper Th17: recognizes and binds STAT3 acetylated at 'Lys-87', promoting STAT3 recruitment to chromatin. In addition to acetylated lysines, also recognizes and binds lysine residues on histones that are both methylated and acetylated on the same side chain to form N6-acetyl-N6-methyllysine (Kacme), an epigenetic mark of active chromatin associated with increased transcriptional initiation. Specifically binds histone H4 acetyl-methylated at 'Lys-5' and 'Lys-12' (H4K5acme and H4K12acme, respectively). This is Bromodomain-containing protein 2 (Brd2) from Rattus norvegicus (Rat).